We begin with the raw amino-acid sequence, 274 residues long: Bis(5'-nucleosyl)-tetraphosphatase, symmetrical (274 aa).

The protein belongs to the Ap4A hydrolase family.

The enzyme catalyses P(1),P(4)-bis(5'-adenosyl) tetraphosphate + H2O = 2 ADP + 2 H(+). Functionally, hydrolyzes diadenosine 5',5'''-P1,P4-tetraphosphate to yield ADP. The protein is Bis(5'-nucleosyl)-tetraphosphatase, symmetrical of Shewanella baltica (strain OS195).